The primary structure comprises 199 residues: Potassium-transporting ATPase KdpC subunit (199 aa).

The helical transmembrane segment at 21–43 (LALLFVCGVVYTGTVTQLGGALF) threads the bilayer.

It belongs to the KdpC family. As to quaternary structure, the system is composed of three essential subunits: KdpA, KdpB and KdpC.

It is found in the cell inner membrane. In terms of biological role, part of the high-affinity ATP-driven potassium transport (or Kdp) system, which catalyzes the hydrolysis of ATP coupled with the electrogenic transport of potassium into the cytoplasm. This subunit acts as a catalytic chaperone that increases the ATP-binding affinity of the ATP-hydrolyzing subunit KdpB by the formation of a transient KdpB/KdpC/ATP ternary complex. The polypeptide is Potassium-transporting ATPase KdpC subunit (Shewanella putrefaciens (strain CN-32 / ATCC BAA-453)).